Here is a 133-residue protein sequence, read N- to C-terminus: ATP synthase epsilon chain, chloroplastic (133 aa).

This sequence belongs to the ATPase epsilon chain family. In terms of assembly, F-type ATPases have 2 components, CF(1) - the catalytic core - and CF(0) - the membrane proton channel. CF(1) has five subunits: alpha(3), beta(3), gamma(1), delta(1), epsilon(1). CF(0) has three main subunits: a, b and c.

It localises to the plastid. The protein localises to the chloroplast thylakoid membrane. In terms of biological role, produces ATP from ADP in the presence of a proton gradient across the membrane. The sequence is that of ATP synthase epsilon chain, chloroplastic from Lotus japonicus (Lotus corniculatus var. japonicus).